Reading from the N-terminus, the 571-residue chain is Urease subunit alpha (571 aa).

The 443-residue stretch at 129–571 folds into the Urease domain; the sequence is GGIDTHIHFI…LPMAQRYFLF (443 aa). Ni(2+) is bound by residues His134, His136, and Lys217. At Lys217 the chain carries N6-carboxylysine. His219 contributes to the substrate binding site. The Ni(2+) site is built by His246 and His272. His320 acts as the Proton donor in catalysis. A Ni(2+)-binding site is contributed by Asp360.

Belongs to the metallo-dependent hydrolases superfamily. Urease alpha subunit family. In terms of assembly, heterotrimer of UreA (gamma), UreB (beta) and UreC (alpha) subunits. Three heterotrimers associate to form the active enzyme. The cofactor is Ni cation. In terms of processing, carboxylation allows a single lysine to coordinate two nickel ions.

The protein resides in the cytoplasm. It carries out the reaction urea + 2 H2O + H(+) = hydrogencarbonate + 2 NH4(+). It participates in nitrogen metabolism; urea degradation; CO(2) and NH(3) from urea (urease route): step 1/1. The polypeptide is Urease subunit alpha (Cupriavidus pinatubonensis (strain JMP 134 / LMG 1197) (Cupriavidus necator (strain JMP 134))).